The following is a 214-amino-acid chain: Ribonuclease HII (214 aa).

In terms of domain architecture, RNase H type-2 spans 26-214; that stretch reads EIVCGVDEAG…PVREAFDLIR (189 aa). 3 residues coordinate a divalent metal cation: D32, E33, and D124.

The protein belongs to the RNase HII family. It depends on Mn(2+) as a cofactor. The cofactor is Mg(2+).

It is found in the cytoplasm. The catalysed reaction is Endonucleolytic cleavage to 5'-phosphomonoester.. Functionally, endonuclease that specifically degrades the RNA of RNA-DNA hybrids. In Burkholderia pseudomallei (strain 668), this protein is Ribonuclease HII.